The chain runs to 277 residues: Bleomycin hydrolase (277 aa).

Cys53 is a catalytic residue.

Belongs to the peptidase C1 family. In terms of assembly, homohexamer. Interacts with NUDT12 (via ANK repeats).

It is found in the cytoplasm. The protein resides in the cytoplasmic granule. It catalyses the reaction Inactivates bleomycin B2 (a cytotoxic glycometallopeptide) by hydrolysis of a carboxyamide bond of beta-aminoalanine, but also shows general aminopeptidase activity. The specificity varies somewhat with source, but amino acid arylamides of Met, Leu and Ala are preferred.. With respect to regulation, strongly inhibited by leupeptin, puromycin, NEM, and divalent cations. Its function is as follows. The normal physiological role of BLM hydrolase is unknown, but it catalyzes the inactivation of the antitumor drug BLM (a glycopeptide) by hydrolyzing the carboxamide bond of its B-aminoalaninamide moiety thus protecting normal and malignant cells from BLM toxicity. The chain is Bleomycin hydrolase (BLMH) from Oryctolagus cuniculus (Rabbit).